Consider the following 89-residue polypeptide: Small ribosomal subunit protein uS15 (89 aa).

This sequence belongs to the universal ribosomal protein uS15 family. As to quaternary structure, part of the 30S ribosomal subunit. Forms a bridge to the 50S subunit in the 70S ribosome, contacting the 23S rRNA.

In terms of biological role, one of the primary rRNA binding proteins, it binds directly to 16S rRNA where it helps nucleate assembly of the platform of the 30S subunit by binding and bridging several RNA helices of the 16S rRNA. Its function is as follows. Forms an intersubunit bridge (bridge B4) with the 23S rRNA of the 50S subunit in the ribosome. This Mycobacterium leprae (strain Br4923) protein is Small ribosomal subunit protein uS15.